Reading from the N-terminus, the 269-residue chain is Chymotrypsin-like elastase family member 2A (269 aa).

The signal sequence occupies residues 1-16; the sequence is MIRALLLSTLVAGALS. A propeptide spans 17-28 (activation peptide); sequence CGLPANLPQLPR. The 239-residue stretch at 29–267 folds into the Peptidase S1 domain; that stretch reads VVGGEDARPN…YIDWINSVIA (239 aa). Cys58 and Cys74 are oxidised to a cystine. Catalysis depends on charge relay system residues His73 and Asp121. 3 disulfides stabilise this stretch: Cys155-Cys222, Cys186-Cys202, and Cys212-Cys243. Ser216 (charge relay system) is an active-site residue.

This sequence belongs to the peptidase S1 family. Elastase subfamily. In terms of assembly, interacts with CPA1. Interacts with SERPINA1. Pancreas.

The protein localises to the secreted. It carries out the reaction Preferential cleavage: Leu-|-Xaa, Met-|-Xaa and Phe-|-Xaa. Hydrolyzes elastin.. Functionally, elastase that enhances insulin signaling and might have a physiologic role in cellular glucose metabolism. Circulates in plasma and reduces platelet hyperactivation, triggers both insulin secretion and degradation, and increases insulin sensitivity. The polypeptide is Chymotrypsin-like elastase family member 2A (CELA2A) (Sus scrofa (Pig)).